A 261-amino-acid chain; its full sequence is Calcium-binding protein 8 (261 aa).

A disordered region spans residues 1–41 (MRLPEQPGDGKPENETKGDQETPERGEEPRRSPAPDFPTWE). Residues 1–234 (MRLPEQPGDG…QNRQTCVRKS (234 aa)) lie on the Cytoplasmic side of the membrane. Residues 8–33 (GDGKPENETKGDQETPERGEEPRRSP) are compositionally biased toward basic and acidic residues. 2 EF-hand domains span residues 78 to 113 (EELDEIREAFRVLDRDGNGFISKQELGMAMRSLGYM) and 114 to 149 (PSEVELAIIMQRLDMDGDGQVDFDEFMTILGPKLVS). Residues Asp-91, Asp-93, Asn-95, Glu-102, Asp-127, Asp-129, Asp-131, Gln-133, and Glu-138 each coordinate Ca(2+). The chain crosses the membrane as a helical; Anchor for type IV membrane protein span at residues 235–255 (LICAFAMAFIISVMLIAANQI). Residues 256 to 261 (LRSGME) lie on the Extracellular side of the membrane.

In terms of assembly, interacts with PI4KB. This binding competes with FREQ/NCS1 binding in a calcium-dependent manner. As to expression, brain-specific. High expression in the cerebellum, hippocampus, and cortex.

It localises to the golgi apparatus. Its subcellular location is the trans-Golgi network membrane. The protein localises to the cytoplasm. It is found in the perinuclear region. The protein resides in the cell membrane. Negatively regulates Golgi-to-plasma membrane trafficking by interacting with PI4KB and inhibiting its activity. May play a role in the physiology of neurons and is potentially important in memory and learning. The chain is Calcium-binding protein 8 (Caln1) from Mus musculus (Mouse).